We begin with the raw amino-acid sequence, 98 residues long: Pancreatic polypeptide prohormone (98 aa).

The signal sequence occupies residues 1–29; that stretch reads MAVAYYCLSLFLLSTWVALLLQPLQGAWG. Tyr-65 carries the post-translational modification Tyrosine amide.

This sequence belongs to the NPY family. Post-translationally, no icosapeptide-like peptide is cleaved from the C-terminal.

It localises to the secreted. Its function is as follows. Hormone secreted by pancreatic cells that acts as a regulator of pancreatic and gastrointestinal functions probably by signaling through the G protein-coupled receptor NPY4R2. This is Pancreatic polypeptide prohormone (Ppy) from Rattus norvegicus (Rat).